The primary structure comprises 168 residues: Signal peptidase I V (168 aa).

Topologically, residues 1–6 (MKKRFW) are cytoplasmic. The helical transmembrane segment at 7–26 (FLAGVVSVVLAIQVKNAVFI) threads the bilayer. The Extracellular segment spans residues 27-168 (DYKVEGVSMN…NIVGVISDAE (142 aa)). Residues Ser-34 and Lys-75 contribute to the active site.

Belongs to the peptidase S26 family.

Its subcellular location is the cell membrane. The catalysed reaction is Cleavage of hydrophobic, N-terminal signal or leader sequences from secreted and periplasmic proteins.. In Bacillus subtilis (strain 168), this protein is Signal peptidase I V (sipV).